Here is a 182-residue protein sequence, read N- to C-terminus: Bifunctional protein PyrR (182 aa).

Positions 100–112 (VVLVDDVLYTGRT) match the PRPP-binding motif.

This sequence belongs to the purine/pyrimidine phosphoribosyltransferase family. PyrR subfamily. As to quaternary structure, homodimer and homohexamer; in equilibrium.

It catalyses the reaction UMP + diphosphate = 5-phospho-alpha-D-ribose 1-diphosphate + uracil. Functionally, regulates transcriptional attenuation of the pyrimidine nucleotide (pyr) operon by binding in a uridine-dependent manner to specific sites on pyr mRNA. This disrupts an antiterminator hairpin in the RNA and favors formation of a downstream transcription terminator, leading to a reduced expression of downstream genes. In terms of biological role, also displays a weak uracil phosphoribosyltransferase activity which is not physiologically significant. This Natranaerobius thermophilus (strain ATCC BAA-1301 / DSM 18059 / JW/NM-WN-LF) protein is Bifunctional protein PyrR.